Here is a 195-residue protein sequence, read N- to C-terminus: L-rhamnose-binding lectin CSL2 (195 aa).

2 SUEL-type lectin domains span residues 1–97 and 104–195; these read TRVV…YTCL and TCEG…YTCG.

Its function is as follows. L-rhamnose binding lectin. Has hemagglutinating activity towards rabbit erythrocytes and human type B erythrocytes. Hemagglutinating activity is inhibited by smooth-type lipopolysaccharide (LPS) from S.flexneri 1A and E.coli K12, but not by rough-type LPS from S.flexneri, E.coli K12 and E.coli EH100. Agglutinates E.coli K12 and B.subtilis. The polypeptide is L-rhamnose-binding lectin CSL2 (Oncorhynchus keta (Chum salmon)).